The sequence spans 717 residues: DNA-binding protein RFX2 (717 aa).

The interval 1–28 (MQNSEGGADSPASVALRPAAQPMPASPQ) is disordered. Residue S26 is modified to Phosphoserine. Positions 194–269 (HLQWLLDNYE…YHYYGIRLKP (76 aa)) form a DNA-binding region, RFX-type winged-helix. Residues 286–318 (RQQPTHQKPRYRPAQKSDSLGDGSAHSNMHGMP) are disordered. A Phosphoserine modification is found at S411. Over residues 685–710 (DGHSSEADVDGRSLGEPLVKRERSDP) the composition is skewed to basic and acidic residues. The segment at 685–717 (DGHSSEADVDGRSLGEPLVKRERSDPSHPLQGI) is disordered.

This sequence belongs to the RFX family. As to quaternary structure, homodimer; probably only forms homodimers in testis. Heterodimer; heterodimerizes with RFX1 and RFX3.

The protein localises to the nucleus. It localises to the cytoplasm. Transcription factor that acts as a key regulator of spermatogenesis. Acts by regulating expression of genes required for the haploid phase during spermiogenesis, such as genes required for cilium assembly and function. Recognizes and binds the X-box, a regulatory motif with DNA sequence 5'-GTNRCC(0-3N)RGYAAC-3' present on promoters. Probably activates transcription of the testis-specific histone gene H1-6. In Mus musculus (Mouse), this protein is DNA-binding protein RFX2 (Rfx2).